A 284-amino-acid polypeptide reads, in one-letter code: UPF0294 protein VV1_1880 (284 aa).

This sequence belongs to the UPF0294 family.

Its subcellular location is the cytoplasm. This chain is UPF0294 protein VV1_1880, found in Vibrio vulnificus (strain CMCP6).